A 310-amino-acid chain; its full sequence is tRNA-cytidine(32) 2-sulfurtransferase (310 aa).

The PP-loop motif signature appears at 47–52; sequence SGGKDS. Positions 122, 125, and 213 each coordinate [4Fe-4S] cluster.

This sequence belongs to the TtcA family. Homodimer. Requires Mg(2+) as cofactor. It depends on [4Fe-4S] cluster as a cofactor.

It localises to the cytoplasm. It catalyses the reaction cytidine(32) in tRNA + S-sulfanyl-L-cysteinyl-[cysteine desulfurase] + AH2 + ATP = 2-thiocytidine(32) in tRNA + L-cysteinyl-[cysteine desulfurase] + A + AMP + diphosphate + H(+). Its pathway is tRNA modification. Catalyzes the ATP-dependent 2-thiolation of cytidine in position 32 of tRNA, to form 2-thiocytidine (s(2)C32). The sulfur atoms are provided by the cysteine/cysteine desulfurase (IscS) system. This chain is tRNA-cytidine(32) 2-sulfurtransferase, found in Serratia proteamaculans (strain 568).